The primary structure comprises 418 residues: D-amino acid dehydrogenase (418 aa).

3 to 17 (VLVLGAGVAGVSSAW) lines the FAD pocket.

Belongs to the DadA oxidoreductase family. FAD is required as a cofactor.

The catalysed reaction is a D-alpha-amino acid + A + H2O = a 2-oxocarboxylate + AH2 + NH4(+). Its pathway is amino-acid degradation; D-alanine degradation; NH(3) and pyruvate from D-alanine: step 1/1. Its function is as follows. Oxidative deamination of D-amino acids. In Neisseria meningitidis serogroup C (strain 053442), this protein is D-amino acid dehydrogenase.